Consider the following 199-residue polypeptide: B3 domain-containing protein Os06g0107800 (199 aa).

The tract at residues 13–32 is disordered; sequence QLQGGGGGHGGGGGGGGGER. The span at 15 to 29 shows a compositional bias: gly residues; it reads QGGGGGHGGGGGGGG. A DNA-binding region (TF-B3) is located at residues 37–141; sequence FEKVVTPSDV…RLFIDCRKRA (105 aa).

The protein localises to the nucleus. In Oryza sativa subsp. japonica (Rice), this protein is B3 domain-containing protein Os06g0107800.